A 253-amino-acid chain; its full sequence is 5-oxoprolinase subunit A (253 aa).

It belongs to the LamB/PxpA family. Forms a complex composed of PxpA, PxpB and PxpC.

It carries out the reaction 5-oxo-L-proline + ATP + 2 H2O = L-glutamate + ADP + phosphate + H(+). In terms of biological role, catalyzes the cleavage of 5-oxoproline to form L-glutamate coupled to the hydrolysis of ATP to ADP and inorganic phosphate. This is 5-oxoprolinase subunit A from Bacillus cereus (strain ATCC 10987 / NRS 248).